The sequence spans 175 residues: E1B protein, small T-antigen (175 aa).

The tract at residues 153–175 (LAEEDEDEEGTTLTTEAEQESSA) is disordered.

Belongs to the adenoviridae E1B 19 kDa protein family.

The sequence is that of E1B protein, small T-antigen from Mus musculus (Mouse).